The following is a 184-amino-acid chain: MKNVTDSFISLGYWPSAESFGFNTDILATNPINLSVVLGVLIFFGKGVLSDLLDNRKQRILKTIQNSEELRGGAIEQLEKARARLRKVEMEADQFRVNGYSEIEREKLNLINSTSKSLEQLENYKNETIRFEQQKAINQVRQQVFQQALQGALGTLNSCLDNELHLRTISANIGMFGTMKEITN.

Residues 27–49 (LATNPINLSVVLGVLIFFGKGVL) form a helical membrane-spanning segment.

It belongs to the ATPase B chain family. F-type ATPases have 2 components, F(1) - the catalytic core - and F(0) - the membrane proton channel. F(1) has five subunits: alpha(3), beta(3), gamma(1), delta(1), epsilon(1). F(0) has four main subunits: a(1), b(1), b'(1) and c(10-14). The alpha and beta chains form an alternating ring which encloses part of the gamma chain. F(1) is attached to F(0) by a central stalk formed by the gamma and epsilon chains, while a peripheral stalk is formed by the delta, b and b' chains.

It is found in the plastid. It localises to the chloroplast thylakoid membrane. F(1)F(0) ATP synthase produces ATP from ADP in the presence of a proton or sodium gradient. F-type ATPases consist of two structural domains, F(1) containing the extramembraneous catalytic core and F(0) containing the membrane proton channel, linked together by a central stalk and a peripheral stalk. During catalysis, ATP synthesis in the catalytic domain of F(1) is coupled via a rotary mechanism of the central stalk subunits to proton translocation. Functionally, component of the F(0) channel, it forms part of the peripheral stalk, linking F(1) to F(0). The sequence is that of ATP synthase subunit b, chloroplastic from Cucumis sativus (Cucumber).